The chain runs to 139 residues: D-ribose pyranase (139 aa).

The active-site Proton donor is His-20. Substrate contacts are provided by residues Asp-28, His-106, and 128-130; that span reads YAN.

Belongs to the RbsD / FucU family. RbsD subfamily. Homodecamer.

Its subcellular location is the cytoplasm. The catalysed reaction is beta-D-ribopyranose = beta-D-ribofuranose. The protein operates within carbohydrate metabolism; D-ribose degradation; D-ribose 5-phosphate from beta-D-ribopyranose: step 1/2. In terms of biological role, catalyzes the interconversion of beta-pyran and beta-furan forms of D-ribose. This Escherichia coli (strain 55989 / EAEC) protein is D-ribose pyranase.